A 152-amino-acid polypeptide reads, in one-letter code: Putative pre-16S rRNA nuclease (152 aa).

This sequence belongs to the YqgF nuclease family.

It is found in the cytoplasm. Could be a nuclease involved in processing of the 5'-end of pre-16S rRNA. This is Putative pre-16S rRNA nuclease from Synechocystis sp. (strain ATCC 27184 / PCC 6803 / Kazusa).